The following is an 84-amino-acid chain: uncharacterized protein (84 aa).

This is an uncharacterized protein from Caenorhabditis elegans.